The primary structure comprises 86 residues: Protein YwqI (86 aa).

Residues D57 to I83 adopt a coiled-coil conformation.

This Bacillus subtilis (strain 168) protein is Protein YwqI (ywqI).